A 539-amino-acid polypeptide reads, in one-letter code: uncharacterized protein (539 aa).

6–20 provides a ligand contact to FAD; that stretch reads LIIGGGGAAARAAIE. Residues His227 and Arg243 contribute to the active site.

The protein belongs to the FAD-dependent oxidoreductase 2 family. FRD/SDH subfamily. It depends on FAD as a cofactor.

This is an uncharacterized protein from Methanocaldococcus jannaschii (strain ATCC 43067 / DSM 2661 / JAL-1 / JCM 10045 / NBRC 100440) (Methanococcus jannaschii).